A 394-amino-acid polypeptide reads, in one-letter code: MAKAKFERTKPHVNIGTIGHVDHGKTSLTAAITIILAKTGGAKATAYDQIDAAPEEKERGITISTAHVEYETQNRHYAHVDCPGHADYVKNMITGAAQMDGAILVVSAADGPMPQTREHILLAKQVGVPAMVVFLNKVDMVDDPDLLELVEMEVRELLSKYGFPGNEIPIIKGSALQALEGKPEGEKAINELMNAVDSYIPQPIRATDKPFLMPIEDVFSISGRGTVVTGRVESGIIKVGEEIEIVGLKNTQKTTCTGVEMFRKLLDEGQSGDNVGILLRGTKREEVERGQVLAKPGSIKPHDKFEAEVYVLSKEEGGRHTPFTNDYRPQFYFRTTDVTGTIKLPSDKQMVMPGDNATFSVELIKPIAMQEGLKFSIREGGRTVGAGIVTKINN.

The region spanning 10–204 (KPHVNIGTIG…AVDSYIPQPI (195 aa)) is the tr-type G domain. Residues 19-26 (GHVDHGKT) form a G1 region. A GTP-binding site is contributed by 19–26 (GHVDHGKT). T26 is a binding site for Mg(2+). The interval 60–64 (GITIS) is G2. Residues 81–84 (DCPG) are G3. GTP is bound by residues 81 to 85 (DCPGH) and 136 to 139 (NKVD). Residues 136 to 139 (NKVD) are G4. The segment at 174–176 (SAL) is G5.

It belongs to the TRAFAC class translation factor GTPase superfamily. Classic translation factor GTPase family. EF-Tu/EF-1A subfamily. In terms of assembly, monomer.

It localises to the cytoplasm. It carries out the reaction GTP + H2O = GDP + phosphate + H(+). In terms of biological role, GTP hydrolase that promotes the GTP-dependent binding of aminoacyl-tRNA to the A-site of ribosomes during protein biosynthesis. This Rickettsia prowazekii (strain Madrid E) protein is Elongation factor Tu.